The chain runs to 374 residues: 12-oxophytodienoate reductase 2 (374 aa).

Met1 bears the N-acetylmethionine mark. Residues 33–35 (PLT), Ala66, and Gln108 each bind FMN. Residue His185 coordinates substrate. Residue Tyr190 is the Proton donor of the active site. Position 237 (Arg237) interacts with FMN. Arg277 provides a ligand contact to substrate. Residues 305–307 (AGG) and 328–329 (GR) each bind FMN.

This sequence belongs to the NADH:flavin oxidoreductase/NADH oxidase family. Requires FMN as cofactor. Expressed at highest levels in roots and cotyledons, and at lower levels in leaves, shoots and flowers (sepals, petals, maturing siliques and developing pollen).

The protein resides in the cytoplasm. It catalyses the reaction (1S,2S)-OPC-8 + NADP(+) = (9S,13S,15Z)-12-oxophyto-10,15-dienoate + NADPH + H(+). It carries out the reaction a 4,5-didehydrojasmonate + NADPH + H(+) = a jasmonate + NADP(+). Its pathway is lipid metabolism; oxylipin biosynthesis. Its function is as follows. Specifically cleaves olefinic bonds in alpha,beta-unsaturated carbonyls and may be involved in detoxification or modification of these reactive compounds. May be involved in the biosynthesis or metabolism of oxylipin signaling molecules. In vitro, reduces 9R,13R-12-oxophytodienoic acid (9R,13R-OPDA) to 9R,13R-OPC-8:0, but only poorly 9S,13S-OPDA, the natural precursor of jasmonic acid (JA). Can detoxify the explosive 2,4,6-trinitrotoluene (TNT) in vitro and in vivo by catalyzing its nitroreduction to form hydroxylamino-dinitrotoluene (HADNT). Functions in an alternative and OPR3-independent pathway for JA biosynthesis. Catalyzes the NADPH-dependent reduction of 4,5-didehydrojasmonates to jasmonates. The chain is 12-oxophytodienoate reductase 2 from Arabidopsis thaliana (Mouse-ear cress).